Reading from the N-terminus, the 408-residue chain is Arginine biosynthesis bifunctional protein ArgJ (408 aa).

Substrate contacts are provided by T158, K184, T195, E281, N403, and T408. Residue T195 is the Nucleophile of the active site.

It belongs to the ArgJ family. In terms of assembly, heterotetramer of two alpha and two beta chains.

It localises to the cytoplasm. The enzyme catalyses N(2)-acetyl-L-ornithine + L-glutamate = N-acetyl-L-glutamate + L-ornithine. It catalyses the reaction L-glutamate + acetyl-CoA = N-acetyl-L-glutamate + CoA + H(+). The protein operates within amino-acid biosynthesis; L-arginine biosynthesis; L-ornithine and N-acetyl-L-glutamate from L-glutamate and N(2)-acetyl-L-ornithine (cyclic): step 1/1. Its pathway is amino-acid biosynthesis; L-arginine biosynthesis; N(2)-acetyl-L-ornithine from L-glutamate: step 1/4. In terms of biological role, catalyzes two activities which are involved in the cyclic version of arginine biosynthesis: the synthesis of N-acetylglutamate from glutamate and acetyl-CoA as the acetyl donor, and of ornithine by transacetylation between N(2)-acetylornithine and glutamate. This chain is Arginine biosynthesis bifunctional protein ArgJ, found in Shouchella clausii (strain KSM-K16) (Alkalihalobacillus clausii).